The following is a 42-amino-acid chain: uncharacterized protein (42 aa).

The protein localises to the plastid. Its subcellular location is the chloroplast. This is an uncharacterized protein from Diacronema lutheri (Unicellular marine alga).